An 84-amino-acid polypeptide reads, in one-letter code: uncharacterized protein (84 aa).

A run of 3 helical transmembrane segments spans residues 8–28 (IYFF…VNLL), 30–50 (INVI…ISTI), and 63–83 (VLFM…LYIP).

It is found in the cell membrane. This is an uncharacterized protein from Methanocaldococcus jannaschii (strain ATCC 43067 / DSM 2661 / JAL-1 / JCM 10045 / NBRC 100440) (Methanococcus jannaschii).